Consider the following 215-residue polypeptide: Cytochrome b6 (215 aa).

The chain crosses the membrane as a helical span at residues 32–52 (IFYCLGGITLTCFLVQVATGF). Residue Cys35 participates in heme c binding. His86 and His100 together coordinate heme b. Transmembrane regions (helical) follow at residues 90–110 (ASMM…TGGF), 116–136 (LTWV…VTGY), and 186–206 (LHTF…FLMI). Heme b contacts are provided by His187 and His202.

Belongs to the cytochrome b family. PetB subfamily. The 4 large subunits of the cytochrome b6-f complex are cytochrome b6, subunit IV (17 kDa polypeptide, PetD), cytochrome f and the Rieske protein, while the 4 small subunits are PetG, PetL, PetM and PetN. The complex functions as a dimer. Requires heme b as cofactor. It depends on heme c as a cofactor.

Its subcellular location is the plastid. The protein localises to the chloroplast thylakoid membrane. Functionally, component of the cytochrome b6-f complex, which mediates electron transfer between photosystem II (PSII) and photosystem I (PSI), cyclic electron flow around PSI, and state transitions. The sequence is that of Cytochrome b6 from Morus indica (Mulberry).